Consider the following 68-residue polypeptide: Gene 42 protein (68 aa).

This is Gene 42 protein (42) from Mycobacterium phage D29 (Mycobacteriophage D29).